We begin with the raw amino-acid sequence, 512 residues long: Cytochrome P450 72A13 (512 aa).

The helical transmembrane segment at 2-22 threads the bilayer; it reads EISVASVTVSVAVVVVSWWVW. Cys-460 provides a ligand contact to heme.

Belongs to the cytochrome P450 family. Heme is required as a cofactor.

The protein localises to the membrane. This chain is Cytochrome P450 72A13 (CYP72A13), found in Arabidopsis thaliana (Mouse-ear cress).